The chain runs to 89 residues: Small ribosomal subunit protein uS15 (89 aa).

The protein belongs to the universal ribosomal protein uS15 family. Part of the 30S ribosomal subunit. Forms a bridge to the 50S subunit in the 70S ribosome, contacting the 23S rRNA.

In terms of biological role, one of the primary rRNA binding proteins, it binds directly to 16S rRNA where it helps nucleate assembly of the platform of the 30S subunit by binding and bridging several RNA helices of the 16S rRNA. Functionally, forms an intersubunit bridge (bridge B4) with the 23S rRNA of the 50S subunit in the ribosome. This is Small ribosomal subunit protein uS15 from Mycolicibacterium vanbaalenii (strain DSM 7251 / JCM 13017 / BCRC 16820 / KCTC 9966 / NRRL B-24157 / PYR-1) (Mycobacterium vanbaalenii).